The sequence spans 236 residues: MSYNLTDPYEIARYIKEAKKSTPIKAYIEGDLSNCDFTNIEKFNSGDLYILFGESEEILVIIEKNKDKIKNCRIEQDRRKSAIPLLDMLKINARIEPGATIRDKVIIGENAVIMMGAVINIGAEIGEGTMVDMNAVVGARGKLGKNVHLGAGAVVAGVLEPPSSDPCTIEDNVLIGANAVILEGIKIGKGSVVAAGSIVTTDVPENVVVAGAPAKIIKEVDVKTKDKTKLLDDLRK.

It belongs to the transferase hexapeptide repeat family. DapH subfamily.

It catalyses the reaction (S)-2,3,4,5-tetrahydrodipicolinate + acetyl-CoA + H2O = L-2-acetamido-6-oxoheptanedioate + CoA. Its pathway is amino-acid biosynthesis; L-lysine biosynthesis via DAP pathway; LL-2,6-diaminopimelate from (S)-tetrahydrodipicolinate (acetylase route): step 1/3. Functionally, catalyzes the transfer of an acetyl group from acetyl-CoA to tetrahydrodipicolinate. This chain is 2,3,4,5-tetrahydropyridine-2,6-dicarboxylate N-acetyltransferase, found in Clostridium botulinum (strain 657 / Type Ba4).